A 403-amino-acid polypeptide reads, in one-letter code: 4-hydroxy-3-methylbut-2-en-1-yl diphosphate synthase (ferredoxin) (403 aa).

Residues cysteine 312, cysteine 315, cysteine 346, and glutamate 353 each contribute to the [4Fe-4S] cluster site.

This sequence belongs to the IspG family. The cofactor is [4Fe-4S] cluster.

The enzyme catalyses (2E)-4-hydroxy-3-methylbut-2-enyl diphosphate + 2 oxidized [2Fe-2S]-[ferredoxin] + H2O = 2-C-methyl-D-erythritol 2,4-cyclic diphosphate + 2 reduced [2Fe-2S]-[ferredoxin] + H(+). It functions in the pathway isoprenoid biosynthesis; isopentenyl diphosphate biosynthesis via DXP pathway; isopentenyl diphosphate from 1-deoxy-D-xylulose 5-phosphate: step 5/6. Its function is as follows. Converts 2C-methyl-D-erythritol 2,4-cyclodiphosphate (ME-2,4cPP) into 1-hydroxy-2-methyl-2-(E)-butenyl 4-diphosphate. The polypeptide is 4-hydroxy-3-methylbut-2-en-1-yl diphosphate synthase (ferredoxin) (Synechocystis sp. (strain ATCC 27184 / PCC 6803 / Kazusa)).